The primary structure comprises 513 residues: GMP synthase [glutamine-hydrolyzing] (513 aa).

Residues 8 to 198 (KIIVLDYGSQ…ALNICGAKGN (191 aa)) enclose the Glutamine amidotransferase type-1 domain. The active-site Nucleophile is C85. Residues H172 and E174 contribute to the active site. The region spanning 199–388 (WSMENFIDMQ…LGMPDEIVWR (190 aa)) is the GMPS ATP-PPase domain. 226–232 (SGGVDSS) contributes to the ATP binding site.

In terms of assembly, homodimer.

The catalysed reaction is XMP + L-glutamine + ATP + H2O = GMP + L-glutamate + AMP + diphosphate + 2 H(+). It functions in the pathway purine metabolism; GMP biosynthesis; GMP from XMP (L-Gln route): step 1/1. Functionally, catalyzes the synthesis of GMP from XMP. The sequence is that of GMP synthase [glutamine-hydrolyzing] (guaA) from Lactococcus lactis subsp. cremoris (strain MG1363).